A 1412-amino-acid polypeptide reads, in one-letter code: DNA-directed RNA polymerase subunit beta' (1412 aa).

Zn(2+) contacts are provided by Cys-70, Cys-72, Cys-85, and Cys-88. Positions 458, 460, and 462 each coordinate Mg(2+). Zn(2+) is bound by residues Cys-813, Cys-887, Cys-894, and Cys-897. The disordered stretch occupies residues 1388 to 1412 (EQALLTPATTAEAVVGEEPAPPPAQ). Over residues 1393 to 1405 (TPATTAEAVVGEE) the composition is skewed to low complexity.

The protein belongs to the RNA polymerase beta' chain family. The RNAP catalytic core consists of 2 alpha, 1 beta, 1 beta' and 1 omega subunit. When a sigma factor is associated with the core the holoenzyme is formed, which can initiate transcription. Mg(2+) serves as cofactor. Zn(2+) is required as a cofactor.

The enzyme catalyses RNA(n) + a ribonucleoside 5'-triphosphate = RNA(n+1) + diphosphate. Its function is as follows. DNA-dependent RNA polymerase catalyzes the transcription of DNA into RNA using the four ribonucleoside triphosphates as substrates. In Methylibium petroleiphilum (strain ATCC BAA-1232 / LMG 22953 / PM1), this protein is DNA-directed RNA polymerase subunit beta'.